Here is a 1028-residue protein sequence, read N- to C-terminus: Contactin-6 (1028 aa).

The N-terminal stretch at 1–19 is a signal peptide; sequence MRLLWKLVILLPLINSSAG. 6 Ig-like C2-type domains span residues 26–117, 122–208, 227–308, 318–402, 408–495, and 499–587; these read PIFT…AKLQ, EDFE…RSVQ, PKIE…RNLA, PEWE…AELR, PDFS…GSLI, and RTVI…ESLS. 6 disulfide bridges follow: C50/C100, C144/C196, C249/C297, C339/C386, C431/C479, and C521/C577. N-linked (GlcNAc...) asparagine glycosylation is found at N65 and N193. N-linked (GlcNAc...) asparagine glycosylation is found at N368, N377, and N468. 4 consecutive Fibronectin type-III domains span residues 600-698, 703-800, 805-901, and 902-996; these read PPED…TKAS, APVN…SGED, APRG…TKKS, and PPSQ…KMSS. N-linked (GlcNAc...) asparagine glycans are attached at residues N659, N765, N860, and N865. Position 882 is a phosphotyrosine (Y882). The span at 887–902 shows a compositional bias: polar residues; that stretch reads TGPSSPPVNVTTKKSP. A disordered region spans residues 887–908; sequence TGPSSPPVNVTTKKSPPSQPPA. N895, N931, N956, and N957 each carry an N-linked (GlcNAc...) asparagine glycan. A lipid anchor (GPI-anchor amidated serine) is attached at S999. Positions 1000–1028 are cleaved as a propeptide — removed in mature form; the sequence is RGIQFLEPSTHFLSIVIVIFHCFAIQPLI.

This sequence belongs to the immunoglobulin superfamily. Contactin family. Interacts with PTPRG. As to expression, expressed in nervous system. Highly expressed in cerebellum. Expressed at intermediate level in thalamus, subthalamic nucleus. Weakly expressed in corpus callosum, caudate nucleus and spinal cord.

The protein localises to the cell membrane. Its function is as follows. Contactins mediate cell surface interactions during nervous system development. Participates in oligodendrocytes generation by acting as a ligand of NOTCH1. Its association with NOTCH1 promotes NOTCH1 activation through the released notch intracellular domain (NICD) and subsequent translocation to the nucleus. Involved in motor coordination. The sequence is that of Contactin-6 (CNTN6) from Homo sapiens (Human).